A 602-amino-acid polypeptide reads, in one-letter code: Elongation factor 4 (602 aa).

Residues 6-188 (RNVRNFSIIA…RITEVVPEPA (183 aa)) form the tr-type G domain. Residues 18–23 (DHGKST) and 135–138 (NKID) each bind GTP.

Belongs to the TRAFAC class translation factor GTPase superfamily. Classic translation factor GTPase family. LepA subfamily.

The protein resides in the cell membrane. It carries out the reaction GTP + H2O = GDP + phosphate + H(+). In terms of biological role, required for accurate and efficient protein synthesis under certain stress conditions. May act as a fidelity factor of the translation reaction, by catalyzing a one-codon backward translocation of tRNAs on improperly translocated ribosomes. Back-translocation proceeds from a post-translocation (POST) complex to a pre-translocation (PRE) complex, thus giving elongation factor G a second chance to translocate the tRNAs correctly. Binds to ribosomes in a GTP-dependent manner. The polypeptide is Elongation factor 4 (Oceanobacillus iheyensis (strain DSM 14371 / CIP 107618 / JCM 11309 / KCTC 3954 / HTE831)).